Here is a 172-residue protein sequence, read N- to C-terminus: Secretory-abundant heat soluble protein 64681 (172 aa).

A signal peptide spans 1–19; that stretch reads MSRTIVALILLGLAALAAA. Residues 30–59 form an SAHS-c1 region; sequence EWAGKAWLGKWVSTDRSENWDAFVEALGLP. An SAHS-c2 region spans residues 74–102; sequence WKEGDHYHHQIIIADKSYKQDIQFKLGEE. Residues Asn108 and Asn133 are each glycosylated (N-linked (GlcNAc...) asparagine). The interval 115–164 is SAHS-c3; the sequence is KYTEVGDNLQNEVKIPSKNKTISDSYVVKGDELEKTYKINDVVAKRWYKK.

It belongs to the Secretory-abundant heat soluble protein (SAHS) family.

Its subcellular location is the secreted. Its function is as follows. Secreted heat soluble protein acting as a molecular shield in water-deficient condition. Tardigrade-specific intrinsically disordered proteins (TDPs) are essential for desiccation tolerance by forming non-crystalline amorphous solids upon desiccation, and this vitrified state mirrors their protective capabilities. This Hypsibius exemplaris (Freshwater tardigrade) protein is Secretory-abundant heat soluble protein 64681.